We begin with the raw amino-acid sequence, 341 residues long: Long-chain acyl-[acyl-carrier-protein] reductase (341 aa).

Belongs to the short-chain dehydrogenases/reductases (SDR) family. A divalent metal cation is required as a cofactor.

It carries out the reaction a long-chain fatty aldehyde + holo-[ACP] + NADP(+) = a long-chain fatty acyl-[ACP] + NADPH + H(+). It catalyses the reaction a long-chain fatty aldehyde + holo-[ACP] + NAD(+) = a long-chain fatty acyl-[ACP] + NADH + H(+). Its function is as follows. Catalyzes the NADP-dependent reduction of long-chain acyl-ACP to the corresponding fatty aldehyde. Involved in the biosynthesis of alkanes, mainly heptadecane and pentadecane, by producing the fatty aldehydes used by aldehyde decarbonylase. The sequence is that of Long-chain acyl-[acyl-carrier-protein] reductase from Synechococcus elongatus (strain ATCC 33912 / PCC 7942 / FACHB-805) (Anacystis nidulans R2).